Consider the following 645-residue polypeptide: Threonine--tRNA ligase (645 aa).

In terms of domain architecture, TGS spans 1-61 (MPAITLPDGS…SSDASVKFIT (61 aa)). The segment at 243–536 (DHRRIGREMD…LIEQYAGKFP (294 aa)) is catalytic. Zn(2+) is bound by residues cysteine 336, histidine 387, and histidine 513.

This sequence belongs to the class-II aminoacyl-tRNA synthetase family. As to quaternary structure, homodimer. The cofactor is Zn(2+).

It is found in the cytoplasm. It carries out the reaction tRNA(Thr) + L-threonine + ATP = L-threonyl-tRNA(Thr) + AMP + diphosphate + H(+). Catalyzes the attachment of threonine to tRNA(Thr) in a two-step reaction: L-threonine is first activated by ATP to form Thr-AMP and then transferred to the acceptor end of tRNA(Thr). Also edits incorrectly charged L-seryl-tRNA(Thr). The sequence is that of Threonine--tRNA ligase from Gluconobacter oxydans (strain 621H) (Gluconobacter suboxydans).